We begin with the raw amino-acid sequence, 327 residues long: 2-keto-3-deoxygluconate permease (327 aa).

10 consecutive transmembrane segments (helical) span residues Ile-10–Pro-30, Gly-42–Ile-62, Lys-73–Ser-93, Ile-95–Val-115, Ala-139–Gly-159, Ile-163–Ala-183, Val-199–Ile-219, Leu-224–Ala-244, Thr-254–Ala-274, and Ser-289–Trp-309.

Belongs to the KdgT transporter family.

The protein resides in the cell inner membrane. It catalyses the reaction 2-dehydro-3-deoxy-D-gluconate(in) + H(+)(in) = 2-dehydro-3-deoxy-D-gluconate(out) + H(+)(out). Functionally, catalyzes the proton-dependent uptake of 2-keto-3-deoxygluconate (KDG) into the cell. In Escherichia coli O7:K1 (strain IAI39 / ExPEC), this protein is 2-keto-3-deoxygluconate permease.